A 342-amino-acid polypeptide reads, in one-letter code: Trans-enoyl reductase himH (342 aa).

Residue 46–49 (TDWK) participates in NADP(+) binding. A substrate-binding site is contributed by 133 to 140 (LSVSTAAS). NADP(+) is bound by residues 168–171 (SSSV), 191–194 (SQAN), 255–256 (VM), and 329–330 (VS).

It belongs to the zinc-containing alcohol dehydrogenase family. In terms of assembly, monomer.

It participates in secondary metabolite biosynthesis. Its function is as follows. Trans-enoyl reductase; part of the him gene cluster that mediates the biosynthesis of himeic acid A, a ubiquitin-activating enzyme (E1) inhibitor. First, himA, together with the trans-enoyl reductase himH, catalyzes the formation of apolyketide chain, which is then condensed with leucine by the NRPS activity of himA. Dieckmann cyclization and release from himA gives a tetramic acid intermediate as the product of himA PKS-NRPS. HimG then catalyzes alpha-oxidation of the tetramic acid ring, with a subsequent rearrangement to yield apyrone intermediate. Two terminal methyl groups of polyketide and amide side chains are oxidized to carboxylic acids by himC cytochrome P450 monooxygenase to form himeic acid A. Himeic acid A is further converted to himeic acid B and C during culture growth. No gene responsible for pyrone to pyridone conversion was found in the him gene cluster and himeic acid A is non-enzymatically converted to himeic acid C by the incorporation of an ammonium nitrogen atom in a pH5 buffer, and to himeic acid B at a conversion ratio of 50% during incubation in MeOH for 5 days. This Aspergillus japonicus protein is Trans-enoyl reductase himH.